A 285-amino-acid chain; its full sequence is GPN-loop GTPase 3 (285 aa).

13 to 18 (GSGKST) is a binding site for GTP. Residues 70 to 72 (GPN) carry the Gly-Pro-Asn (GPN)-loop; involved in dimer interface motif. 172 to 175 (TKID) provides a ligand contact to GTP. Residues 253-276 (GEDLEPKEPPLENDDDDDDDEGDE) are disordered. Residues 263 to 275 (LENDDDDDDDEGD) are compositionally biased toward acidic residues.

It belongs to the GPN-loop GTPase family. Heterodimer with gpn1. Binds to RNA polymerase II (RNAPII).

Functionally, small GTPase required for proper localization of RNA polymerase II (RNAPII). May act at an RNAP assembly step prior to nuclear import. The sequence is that of GPN-loop GTPase 3 (gpn3) from Dictyostelium discoideum (Social amoeba).